A 577-amino-acid chain; its full sequence is Outer spore wall assembly protein SHE10 (577 aa).

The N-terminal stretch at 1–23 (MGKLIKLITTLTVLVSLLQYCCE) is a signal peptide. Coiled coils occupy residues 379 to 416 (NETR…ENVE) and 513 to 561 (ILRS…EEDV). The segment covering 525 to 545 (RERKERERKEREKAAAEEFQR) has biased composition (basic and acidic residues). Positions 525–577 (RERKERERKEREKAAAEEFQRQQELLRQQEEEDEEDVSYTSTSTITTTTTMTL) are disordered. A compositionally biased stretch (low complexity) spans 562–577 (SYTSTSTITTTTTMTL).

Belongs to the SHE10 family. As to quaternary structure, component of the mitochondria-localized RNase mitochondrial RNA-processing (RNase MRP) composed of one single RNA encoded by the NME1 gene and at least 31 proteins. Absent in the nucleus-localized RNase MRP (NuMRP).

Its subcellular location is the mitochondrion. In terms of biological role, involved in spore wall assembly. May be a component of the mitochondrial RNase MRP (MtMRP), a ribonucleoprotein endoribonuclease involved in the cleaving RNA transcripts to generate primers for DNA replication in mitochondria. The chain is Outer spore wall assembly protein SHE10 from Saccharomyces cerevisiae (strain Lalvin EC1118 / Prise de mousse) (Baker's yeast).